A 331-amino-acid polypeptide reads, in one-letter code: Autoinducer 2 import system permease protein LsrD (331 aa).

10 helical membrane-spanning segments follow: residues 7-27 (YGWE…FGLS), 45-65 (ICIG…GIDI), 67-87 (FGST…AGVP), 90-110 (IAIP…AGLI), 118-138 (LVIT…LSGI), 162-182 (LLGL…FWLL), 212-232 (TLCL…VLLV), 240-260 (SDLG…GGAN), 261-281 (IYGG…VGYL), and 288-308 (IGTP…LVVV).

This sequence belongs to the binding-protein-dependent transport system permease family. AraH/RbsC subfamily. As to quaternary structure, the complex is composed of two ATP-binding proteins (LsrA), two transmembrane proteins (LsrC and LsrD) and a solute-binding protein (LsrB).

Its subcellular location is the cell inner membrane. Its function is as follows. Part of the ABC transporter complex LsrABCD involved in autoinducer 2 (AI-2) import. Probably responsible for the translocation of the substrate across the membrane. In Yersinia enterocolitica serotype O:8 / biotype 1B (strain NCTC 13174 / 8081), this protein is Autoinducer 2 import system permease protein LsrD (lsrD).